We begin with the raw amino-acid sequence, 205 residues long: GTP cyclohydrolase-2 (205 aa).

A GTP-binding site is contributed by 49-53 (RIHSE). Residues cysteine 54, cysteine 65, and cysteine 67 each contribute to the Zn(2+) site. GTP is bound by residues glutamine 70, 92-94 (EGR), and threonine 114. Aspartate 126 (proton acceptor) is an active-site residue. Arginine 128 (nucleophile) is an active-site residue. Residues threonine 149 and lysine 154 each coordinate GTP.

This sequence belongs to the GTP cyclohydrolase II family. Zn(2+) serves as cofactor.

It carries out the reaction GTP + 4 H2O = 2,5-diamino-6-hydroxy-4-(5-phosphoribosylamino)-pyrimidine + formate + 2 phosphate + 3 H(+). Its pathway is cofactor biosynthesis; riboflavin biosynthesis; 5-amino-6-(D-ribitylamino)uracil from GTP: step 1/4. In terms of biological role, catalyzes the conversion of GTP to 2,5-diamino-6-ribosylamino-4(3H)-pyrimidinone 5'-phosphate (DARP), formate and pyrophosphate. In Shewanella woodyi (strain ATCC 51908 / MS32), this protein is GTP cyclohydrolase-2.